The sequence spans 415 residues: Lupus La protein homolog (415 aa).

In terms of domain architecture, HTH La-type RNA-binding spans 7–99 (NEKMTALEAK…RRSPSRPLPE (93 aa)). Residues Ser-92 and Ser-94 each carry the phosphoserine modification. Residues 111 to 187 (RSVYIKGFPT…TNLLILFKED (77 aa)) enclose the RRM domain. Lys-116 is subject to N6-acetyllysine. At Thr-120 the chain carries Phosphothreonine. Lys-128, Lys-327, and Lys-356 each carry N6-acetyllysine. Residues 226 to 346 (EGKMGCLLKF…GRFKGSHVFT (121 aa)) enclose the xRRM domain. Positions 349–415 (RRFKGKGKGN…KKRENGARDK (67 aa)) are disordered. A Phosphothreonine modification is found at Thr-377. Positions 377–415 (TRFDDDDRRRGPMKRGRDGRDREEPASKHKKRENGARDK) are enriched in basic and acidic residues.

In terms of assembly, interacts with DDX15. May interact with RUFY1. Phosphorylated.

The protein resides in the nucleus. Binds to the 3' poly(U) terminus of nascent RNA polymerase III transcripts, protecting them from exonuclease digestion and facilitating their folding and maturation. In Mus musculus (Mouse), this protein is Lupus La protein homolog (Ssb).